Consider the following 88-residue polypeptide: Small ribosomal subunit protein uS15 (88 aa).

It belongs to the universal ribosomal protein uS15 family. As to quaternary structure, part of the 30S ribosomal subunit. Forms a bridge to the 50S subunit in the 70S ribosome, contacting the 23S rRNA.

One of the primary rRNA binding proteins, it binds directly to 16S rRNA where it helps nucleate assembly of the platform of the 30S subunit by binding and bridging several RNA helices of the 16S rRNA. Its function is as follows. Forms an intersubunit bridge (bridge B4) with the 23S rRNA of the 50S subunit in the ribosome. This is Small ribosomal subunit protein uS15 from Acidobacterium capsulatum (strain ATCC 51196 / DSM 11244 / BCRC 80197 / JCM 7670 / NBRC 15755 / NCIMB 13165 / 161).